Reading from the N-terminus, the 452-residue chain is La-related protein 1B (452 aa).

The segment covering 1-22 (MATTASSAANSASRFSIDSSIS) has biased composition (low complexity). Residues 1 to 251 (MATTASSAAN…GFSHRNYSGR (251 aa)) form a disordered region. The residue at position 2 (A2) is an N-acetylalanine. A compositionally biased stretch (polar residues) spans 44 to 68 (LSLSQDDPFSAPSVSPPTGNNSSDY). Low complexity-rich tracts occupy residues 99–117 (SWPA…SPSL), 136–163 (ATSN…VNNS), 171–185 (NNNT…NVSN), and 206–223 (SGNF…SYPR). Positions 225–236 (EGLHHGNRRNYE) are enriched in basic and acidic residues. Over residues 237 to 247 (HGNQSGFSHRN) the composition is skewed to polar residues. The HTH La-type RNA-binding domain maps to 328 to 417 (RNFDAILYNK…RGDWDKYLLP (90 aa)). The interval 419 to 452 (EPSRSGPAAGASNNASLVSQIESMTLSERSREGV) is disordered. The segment covering 422–434 (RSGPAAGASNNAS) has biased composition (low complexity). Residues 435–445 (LVSQIESMTLS) are compositionally biased toward polar residues.

The protein belongs to the LARP family.

The protein resides in the cytoplasm. In terms of biological role, promotes leaf senescence. The polypeptide is La-related protein 1B (LARP1B) (Arabidopsis thaliana (Mouse-ear cress)).